Reading from the N-terminus, the 224-residue chain is UPF0758 protein VFMJ11_0123 (224 aa).

The region spanning 102–224 is the MPN domain; the sequence is ALTSPEHTKR…IVSFAERGWI (123 aa). The Zn(2+) site is built by histidine 173, histidine 175, and aspartate 186. The short motif at 173-186 is the JAMM motif element; sequence HNHPSGVAEPSQAD.

This sequence belongs to the UPF0758 family.

In Aliivibrio fischeri (strain MJ11) (Vibrio fischeri), this protein is UPF0758 protein VFMJ11_0123.